The primary structure comprises 555 residues: Transcriptional adapter 2b (555 aa).

The ZZ-type zinc-finger motif lies at 8–63 (FTKYNCTNCQDDIQGIRVHCAECENFDLCLQCFAAGAEIGAHQNNHSYQFMDTGTS). C13, C16, C27, C30, C36, C39, H49, and H53 together coordinate Zn(2+). One can recognise an SANT domain in the interval 69-121 (RGKGAWTAREEIRLLDAIEQYGFGNWEDISKHIETKSAEDAKEEYVNKFVNGT). The interval 318-372 (THRSTGPYGHGKTDHTHTSNGSHRPPSSSLHSPQPNLRKVEMSSGGEASSNSIAP) is disordered. Over residues 339–352 (SHRPPSSSLHSPQP) the composition is skewed to low complexity. Residues 363 to 372 (GEASSNSIAP) are compositionally biased toward polar residues.

As to quaternary structure, component of histone acetyltransferase complexes containing Gcn5 and Ada3. Can heterooligomerize with Isoform A. Component of the Spt-Ada-Gcn5 acetyltransferase (SAGA) complex consisting of Ada1, Ada2b (Isoform B), Ada3, wda, Saf6, Spt3, Spt7, Spt20, Taf9, Taf10b, Taf12, Nipped-A/Tra1, Sf3b3, Sf3b5, not/nonstop, Sgf11, Sgf29, e(y)2, Atxn7 and Gcn5. Taf5 and Taf10, which has partially redundant properties with Taf10b, may also be part of this complex. Interacts (via C-terminus) with Spt3 and Taf12; the interactions are direct. Interacts with Ada3; the interaction is probably direct. May also interact directly with Spt7 and Gcn5. Interacts with p53. In terms of assembly, can heterooligomerize with Isoform B. Component of the Chiffon histone acetyltransferase (CHAT) complex consisting of Ada3, Sgf29, Gcn5, chif/chiffon and Ada2b (Isoform A). Interacts (via N-terminus) with Gcn5 and Ada3; the interaction is direct. Can interact directly with Spt7 in vitro but in vivo this interaction is not stable probably due to the absence of other SAGA components. Interacts with p53. In terms of tissue distribution, expressed in nurse cells of stage 10 egg chambers and transcripts are dumped into the oocyte when nurse cells degenerate at late oogenesis.

It is found in the nucleus. Functionally, component of several Gcn5-containing histone acetyltransferase complexes that regulate nucleosome organization; involved in acetylation of histone H3, particularly on Lys-10 (H3K9ac) and Lys-15 (H3K14ac). Regulates the transcription of a subset of genes during development; affects recruitment of RNA polymerase II. May be involved in the function of some acidic activation domains, which activate transcription at distant sites. Involved in the p53-dependent apoptosis pathway response to DNA damage by genotoxic agents. Component of the SAGA histone acetyltransferase complex, which predominantly acetylates histone H3. In terms of biological role, component of the CHAT histone acetyltransferase complex, which predominantly acetylates histone H3. This chain is Transcriptional adapter 2b, found in Drosophila melanogaster (Fruit fly).